The sequence spans 355 residues: Protein-glutamate methylesterase/protein-glutamine glutaminase (355 aa).

Residues 4-121 (KVLIIDDSAL…ANGMHEYSEM (118 aa)) enclose the Response regulatory domain. Asp-55 carries the post-translational modification 4-aspartylphosphate. Positions 156–348 (LISSEKLIII…GRVLQYLAAN (193 aa)) constitute a CheB-type methylesterase domain. Active-site residues include Ser-168, His-194, and Asp-290.

Belongs to the CheB family. In terms of processing, phosphorylated by CheA. Phosphorylation of the N-terminal regulatory domain activates the methylesterase activity.

The protein resides in the cytoplasm. It carries out the reaction [protein]-L-glutamate 5-O-methyl ester + H2O = L-glutamyl-[protein] + methanol + H(+). The catalysed reaction is L-glutaminyl-[protein] + H2O = L-glutamyl-[protein] + NH4(+). Functionally, involved in chemotaxis. Part of a chemotaxis signal transduction system that modulates chemotaxis in response to various stimuli. Catalyzes the demethylation of specific methylglutamate residues introduced into the chemoreceptors (methyl-accepting chemotaxis proteins or MCP) by CheR. Also mediates the irreversible deamidation of specific glutamine residues to glutamic acid. The sequence is that of Protein-glutamate methylesterase/protein-glutamine glutaminase from Methylobacillus flagellatus (strain ATCC 51484 / DSM 6875 / VKM B-1610 / KT).